Consider the following 298-residue polypeptide: HTH-type transcriptional regulator ArgP (298 aa).

The HTH lysR-type domain maps to Val4–Thr60. The segment at residues Phe21–Lys40 is a DNA-binding region (H-T-H motif).

This sequence belongs to the LysR transcriptional regulatory family. As to quaternary structure, homodimer.

Functionally, controls the transcription of genes involved in arginine and lysine metabolism. The polypeptide is HTH-type transcriptional regulator ArgP (Photobacterium profundum (strain SS9)).